Here is a 367-residue protein sequence, read N- to C-terminus: Pre-small/secreted glycoprotein (367 aa).

The signal sequence occupies residues 1-33; it reads MGSGYQLLQLPRERFRKTSFLVWVIILFQRAIS. An N-linked (GlcNAc...) asparagine; by host glycan is attached at N41. Disulfide bonds link C109-C136 and C122-C148. N-linked (GlcNAc...) asparagine; by host glycans are attached at residues N205, N239, N258, and N269.

Belongs to the filoviruses glycoprotein family. As to quaternary structure, homodimer; disulfide-linked. The homodimers are linked by two disulfide bonds in a parallel orientation. Monomer. In terms of processing, this precursor is processed into mature sGP and delta-peptide by host furin or furin-like proteases. The cleavage site corresponds to the furin optimal cleavage sequence [KR]-X-[KR]-R. N-glycosylated. Post-translationally, O-glycosylated.

Its subcellular location is the secreted. In terms of biological role, seems to possess an anti-inflammatory activity as it can reverse the barrier-decreasing effects of TNF alpha. Might therefore contribute to the lack of inflammatory reaction seen during infection in spite the of extensive necrosis and massive virus production. Does not seem to be involved in activation of primary macrophages. Does not seem to interact specifically with neutrophils. Viroporin that permeabilizes mammalian cell plasma membranes. It acts by altering permeation of ionic compounds and small molecules. This activity may lead to viral enterotoxic activity. The protein is Pre-small/secreted glycoprotein (GP) of Reston ebolavirus (strain Siena/Philippine-92) (REBOV).